The sequence spans 338 residues: Tetraacyldisaccharide 4'-kinase (338 aa).

51-58 (HLGGAGKT) contributes to the ATP binding site.

It belongs to the LpxK family.

It catalyses the reaction a lipid A disaccharide + ATP = a lipid IVA + ADP + H(+). It functions in the pathway glycolipid biosynthesis; lipid IV(A) biosynthesis; lipid IV(A) from (3R)-3-hydroxytetradecanoyl-[acyl-carrier-protein] and UDP-N-acetyl-alpha-D-glucosamine: step 6/6. Functionally, transfers the gamma-phosphate of ATP to the 4'-position of a tetraacyldisaccharide 1-phosphate intermediate (termed DS-1-P) to form tetraacyldisaccharide 1,4'-bis-phosphate (lipid IVA). The polypeptide is Tetraacyldisaccharide 4'-kinase (Rhodopseudomonas palustris (strain HaA2)).